We begin with the raw amino-acid sequence, 197 residues long: uncharacterized protein (197 aa).

This is an uncharacterized protein from Acanthamoeba polyphaga (Amoeba).